The following is a 209-amino-acid chain: Kynurenine formamidase (209 aa).

W19 is a binding site for substrate. H49, H53, and D55 together coordinate Zn(2+). The active-site Proton donor/acceptor is the H59. Zn(2+) contacts are provided by H160 and E172.

Belongs to the Cyclase 1 superfamily. KynB family. As to quaternary structure, homodimer. Requires Zn(2+) as cofactor.

It carries out the reaction N-formyl-L-kynurenine + H2O = L-kynurenine + formate + H(+). It functions in the pathway amino-acid degradation; L-tryptophan degradation via kynurenine pathway; L-kynurenine from L-tryptophan: step 2/2. Functionally, catalyzes the hydrolysis of N-formyl-L-kynurenine to L-kynurenine, the second step in the kynurenine pathway of tryptophan degradation. In Geobacillus thermodenitrificans (strain NG80-2), this protein is Kynurenine formamidase.